Here is a 237-residue protein sequence, read N- to C-terminus: DNA replication inhibitor toxin SocB (237 aa).

Interacts with cognate antitoxin SocA and with beta sliding clamp (dnaN). Degraded by ClpXP, recognition of SocB by ClpX requires SocA.

The protein localises to the cytoplasm. Functionally, toxic component of an atypical type II toxin-antitoxin (TA) system. Upon overexpression in the absence of its cognate antitoxin SocA, leads to inhibition of colony formation, cellular filamentation, incomplete DNA replication and induction of the SOS response. Exercises toxicity by binding the beta sliding clamp (dnaN), blocking DNA replication and leading to premature replication fork collapse and incomplete cell division. Unlike most type II TA systems, the SocB toxin is unstable and targeted by its cognate antitoxin SocA for degradation by ClpXP. Not toxic upon expression in E.coli. This chain is DNA replication inhibitor toxin SocB, found in Caulobacter vibrioides (strain NA1000 / CB15N) (Caulobacter crescentus).